We begin with the raw amino-acid sequence, 55 residues long: Mannose/glucose-specific lectin alpha chain (55 aa).

It belongs to the leguminous lectin family. Tetramer of two alpha and two beta chains.

This Lathyrus sativus (White vetchling) protein is Mannose/glucose-specific lectin alpha chain.